A 326-amino-acid chain; its full sequence is Beta-ketoacyl-[acyl-carrier-protein] synthase III (326 aa).

Active-site residues include cysteine 111 and histidine 252. Residues 253–257 (QANIR) form an ACP-binding region. Asparagine 282 is a catalytic residue.

It belongs to the thiolase-like superfamily. FabH family. In terms of assembly, homodimer.

It localises to the plastid. It is found in the chloroplast. It catalyses the reaction malonyl-[ACP] + acetyl-CoA + H(+) = 3-oxobutanoyl-[ACP] + CO2 + CoA. It participates in lipid metabolism; fatty acid biosynthesis. Functionally, catalyzes the condensation reaction of fatty acid synthesis by the addition to an acyl acceptor of two carbons from malonyl-ACP. Catalyzes the first condensation reaction which initiates fatty acid synthesis and may therefore play a role in governing the total rate of fatty acid production. Possesses both acetoacetyl-ACP synthase and acetyl transacylase activities. Its substrate specificity determines the biosynthesis of branched-chain and/or straight-chain of fatty acids. This chain is Beta-ketoacyl-[acyl-carrier-protein] synthase III, found in Porphyra umbilicalis (Purple laver).